Reading from the N-terminus, the 510-residue chain is Bifunctional pantoate ligase/cytidylate kinase (510 aa).

The segment at 1–276 is pantoate--beta-alanine ligase; that stretch reads MKKVIIRKTE…CGETRLIDHV (276 aa). 29–36 lines the ATP pocket; it reads MGNLHNGH. The Proton donor role is filled by H36. Q61 contributes to the (R)-pantoate binding site. Q61 lines the beta-alanine pocket. ATP is bound at residue 150-153; the sequence is GEKD. Q156 provides a ligand contact to (R)-pantoate. ATP is bound at residue 187–190; sequence LSSR. Residues 277 to 510 are cytidylate kinase; the sequence is FLMKRRPIIA…DKIPKETEIK (234 aa).

It in the N-terminal section; belongs to the pantothenate synthetase family. This sequence in the C-terminal section; belongs to the cytidylate kinase family. Type 1 subfamily.

Its subcellular location is the cytoplasm. The catalysed reaction is (R)-pantoate + beta-alanine + ATP = (R)-pantothenate + AMP + diphosphate + H(+). It catalyses the reaction CMP + ATP = CDP + ADP. The enzyme catalyses dCMP + ATP = dCDP + ADP. It functions in the pathway cofactor biosynthesis; (R)-pantothenate biosynthesis; (R)-pantothenate from (R)-pantoate and beta-alanine: step 1/1. In terms of biological role, catalyzes the condensation of pantoate with beta-alanine in an ATP-dependent reaction via a pantoyl-adenylate intermediate. Functionally, catalyzes the transfer of a phosphate group from ATP to either CMP or dCMP to form CDP or dCDP and ADP, respectively. The chain is Bifunctional pantoate ligase/cytidylate kinase from Prochlorococcus marinus (strain MIT 9215).